Here is a 139-residue protein sequence, read N- to C-terminus: D-ribose pyranase (139 aa).

The active-site Proton donor is the H20. Substrate contacts are provided by residues D28, H106, and 128–130 (FAN).

The protein belongs to the RbsD / FucU family. RbsD subfamily. Homodecamer.

The protein localises to the cytoplasm. It catalyses the reaction beta-D-ribopyranose = beta-D-ribofuranose. Its pathway is carbohydrate metabolism; D-ribose degradation; D-ribose 5-phosphate from beta-D-ribopyranose: step 1/2. Functionally, catalyzes the interconversion of beta-pyran and beta-furan forms of D-ribose. This is D-ribose pyranase from Yersinia pseudotuberculosis serotype O:1b (strain IP 31758).